A 598-amino-acid chain; its full sequence is MAARLPLAACVVAFHLCLLLSSLVRSPSTALRRLSEAESSLVRHGHGVGIRPAYHFLPAKNWQNDPNGPMYHNGVYHMFYQYNPLGAMWQPGNLSWGHSVSRDLVNWDALDTALDPTAPFDYNGCWSGSATILPGGIPALLYTGRIDADKEVQVQNVAFPKNPADPLLREWVKPAYNPVIPLPADVPGDNFRDPTTAWVGRDGLWRIAVAAKVGGPNGIASTLIYRSKDFRHWKRNASPLYTSRAAGMVECPDLFPVAEPGVEEGRLGYASGPASGAVRHVLKLSVMNTTQDYYAVGRYDDVADTFVPEVDVERNADDCRTWRRFDYGHVYASKSFFDSSKNRRVLWAWANESDSQDNDIARGWSGVQTVPRKVWLDEDGKQVRQWPIEEIETLRSKRVVGLLGAQVNAGGVNKITGVGAQADVEAIFEIPSLEEAETFQPNWLLDPQKLCEENGASVPGKVGPFGLLVMASSNMQEHTAIFFRVFRHNQKYKVLMCTDLTRSTGRDNVYKPSYGGFVDIDIEQQGRTISLRTLIDHSVVESFGGGGRTCITARVYPEHAENKNSHVFVFNNGTGLVKVSKLEAWRLAMASVNVVHGR.

An N-terminal signal peptide occupies residues 1–30; sequence MAARLPLAACVVAFHLCLLLSSLVRSPSTA. Residue Asp-65 is part of the active site. Asn-93, Asn-288, and Asn-351 each carry an N-linked (GlcNAc...) asparagine glycan. A disulfide bridge connects residues Cys-451 and Cys-497. N-linked (GlcNAc...) asparagine glycosylation occurs at Asn-572.

This sequence belongs to the glycosyl hydrolase 32 family. Expressed in leaves, stems, roots and inflorescences. Maximum expression is detected in stems, particularly the penultimate internode.

The enzyme catalyses Hydrolysis of terminal, non-reducing (2-&gt;6)-linked beta-D-fructofuranose residues in fructans.. Its activity is regulated as follows. Not inhibited by sucrose. Its function is as follows. Hydrolyzes levan-type beta-(2-&gt;6)-linked fructans to fructose, but not inulin-type beta-(2-&gt;1)-linked fructans. This is Fructan 6-exohydrolase from Triticum aestivum (Wheat).